Consider the following 339-residue polypeptide: Beta-ketoacyl-[acyl-carrier-protein] synthase III (339 aa).

Catalysis depends on residues C119 and H262. Residues 263 to 267 form an ACP-binding region; sequence QANQR. N292 is an active-site residue.

It belongs to the thiolase-like superfamily. FabH family. Homodimer.

The protein resides in the cytoplasm. The catalysed reaction is malonyl-[ACP] + acetyl-CoA + H(+) = 3-oxobutanoyl-[ACP] + CO2 + CoA. The protein operates within lipid metabolism; fatty acid biosynthesis. In terms of biological role, catalyzes the condensation reaction of fatty acid synthesis by the addition to an acyl acceptor of two carbons from malonyl-ACP. Catalyzes the first condensation reaction which initiates fatty acid synthesis and may therefore play a role in governing the total rate of fatty acid production. Possesses both acetoacetyl-ACP synthase and acetyl transacylase activities. Its substrate specificity determines the biosynthesis of branched-chain and/or straight-chain of fatty acids. The polypeptide is Beta-ketoacyl-[acyl-carrier-protein] synthase III (Prochlorococcus marinus (strain MIT 9313)).